A 424-amino-acid polypeptide reads, in one-letter code: Phosphomethylpyrimidine synthase (424 aa).

Substrate contacts are provided by residues N66, M95, Y124, H163, S185 to G187, D226 to R229, and E265. H269 is a binding site for Zn(2+). Residue F292 coordinates substrate. Residue H333 participates in Zn(2+) binding. 3 residues coordinate [4Fe-4S] cluster: C408, C411, and C415.

It belongs to the ThiC family. Requires [4Fe-4S] cluster as cofactor.

The enzyme catalyses 5-amino-1-(5-phospho-beta-D-ribosyl)imidazole + S-adenosyl-L-methionine = 4-amino-2-methyl-5-(phosphooxymethyl)pyrimidine + CO + 5'-deoxyadenosine + formate + L-methionine + 3 H(+). It participates in cofactor biosynthesis; thiamine diphosphate biosynthesis. Its function is as follows. Catalyzes the synthesis of the hydroxymethylpyrimidine phosphate (HMP-P) moiety of thiamine from aminoimidazole ribotide (AIR) in a radical S-adenosyl-L-methionine (SAM)-dependent reaction. The sequence is that of Phosphomethylpyrimidine synthase from Thermotoga petrophila (strain ATCC BAA-488 / DSM 13995 / JCM 10881 / RKU-1).